Here is a 2357-residue protein sequence, read N- to C-terminus: Protein transport protein Sec16A (2357 aa).

Disordered regions lie at residues 1–25 (MQPP…RSVF) and 57–303 (FSRQ…STFR). Composition is skewed to low complexity over residues 64 to 76 (STPL…SSPP) and 210 to 227 (QMPG…PSGQ). Polar residues predominate over residues 285-303 (HLQSGSHLANNSDPESTFR). 3 positions are modified to phosphoserine: S296, S314, and S331. Disordered stretches follow at residues 335–359 (NPLA…GSGC), 508–540 (APDA…ARPQ), 553–603 (KPED…TGIF), 758–828 (VQPP…NPPV), 924–987 (LLVQ…SSHQ), 1006–1038 (VNVY…PNLD), and 1059–1151 (QELV…APGP). Residues 520–536 (SVSSSYSSRSHGRLSGS) are compositionally biased toward low complexity. 5 positions are modified to phosphoserine: S559, S569, S587, S589, and S592. Phosphothreonine is present on T593. S595 is subject to Phosphoserine. Polar residues-rich tracts occupy residues 766-778 (SGQQ…SAAP) and 803-825 (LQSQ…SLQN). The segment covering 1006-1028 (VNVYNPSHSDSLASQQSVASHPR) has biased composition (polar residues). The tract at residues 1019–1890 (SQQSVASHPR…QQVERQIKEG (872 aa)) is required for localization to endoplasmic reticulum exit sites. S1069 carries the phosphoserine modification. Over residues 1080 to 1101 (ELSNPESLPAQGQAQNSAQSPA) the composition is skewed to polar residues. Positions 1101-1400 (ASLVLVDAGQ…EAPLPPGSFH (300 aa)) are interaction with MIA3. Residues 1102–1405 (SLVLVDAGQQ…PGSFHGDFAY (304 aa)) are required for endoplasmic reticulum localization. A compositionally biased stretch (low complexity) spans 1118–1131 (QSSSVSLVSSGSGQ). Positions 1138–1151 (QPWPQPVPALAPGP) are enriched in pro residues. Phosphoserine is present on residues S1207, S1229, and S1305. The interval 1215–1248 (YPEPERPSSRASHSSERPPPRQGYPEGYYSSKSG) is disordered. Basic and acidic residues predominate over residues 1216 to 1233 (PEPERPSSRASHSSERPP). A compositionally biased stretch (basic and acidic residues) spans 1307-1322 (FGDRPEKRDNNWRYDP). Residues 1307–1378 (FGDRPEKRDN…SLSSHSHQSQ (72 aa)) are disordered. T1325 carries the phosphothreonine modification. Residues S1327, S1347, S1350, S1356, S1359, S1362, S1369, S1573, and S1601 each carry the phosphoserine modification. Residues 1333 to 1354 (DPHRDPYGEEVDRRSVHSEHSA) are compositionally biased toward basic and acidic residues. Low complexity predominate over residues 1356–1375 (SLHSAHSLASRRSSLSSHSH). The central conserved domain (CCD); mediates interaction with RNF183, LRRK2 and SEC13 stretch occupies residues 1434 to 1890 (QVSSRPTSPE…QQVERQIKEG (457 aa)). A Phosphothreonine modification is found at T1907. A phosphoserine mark is found at S1939, S1964, S2022, and S2042. Disordered stretches follow at residues 2049 to 2110 (KFAN…SWFF), 2141 to 2181 (VNLN…PVNM), and 2226 to 2328 (NLFV…MPFY). T2054 is modified (phosphothreonine). Phosphoserine is present on residues S2056, S2073, and S2083. A compositionally biased stretch (basic and acidic residues) spans 2087–2106 (ETKRPGQAAKKETKEPKKGE). The interval 2106-2357 (ESWFFRWLPG…IGQRKHLVLN (252 aa)) is required for interaction with SEC23A. Phosphoserine is present on residues S2271 and S2291. Composition is skewed to low complexity over residues 2289–2302 (ELSR…LSRE) and 2310–2324 (APGD…PSGA).

The protein belongs to the SEC16 family. SEC16A and SEC16B are each present in multiple copies in a heteromeric complex. Interacts with SEC23A. Interacts with RNF183 and RNF152. Interacts with LRRK2 (via ROC domain). Interacts with SEC13. Interacts with RAB10. Interacts with MIA3. Interacts with GORASP2 in response to ER stress. Ubiquitous. Expressed at higher levels in the pancreas.

The protein localises to the endoplasmic reticulum membrane. It localises to the golgi apparatus membrane. Its subcellular location is the cytoplasm. The protein resides in the perinuclear region. It is found in the cytosol. The protein localises to the microsome membrane. In terms of biological role, acts as a molecular scaffold that plays a key role in the organization of the endoplasmic reticulum exit sites (ERES), also known as transitional endoplasmic reticulum (tER). SAR1A-GTP-dependent assembly of SEC16A on the ER membrane forms an organized scaffold defining an ERES. Required for secretory cargo traffic from the endoplasmic reticulum to the Golgi apparatus. Mediates the recruitment of MIA3/TANGO to ERES. Regulates both conventional (ER/Golgi-dependent) and GORASP2-mediated unconventional (ER/Golgi-independent) trafficking of CFTR to cell membrane. Positively regulates the protein stability of E3 ubiquitin-protein ligases RNF152 and RNF183 and the ER localization of RNF183. Acts as a RAB10 effector in the regulation of insulin-induced SLC2A4/GLUT4 glucose transporter-enriched vesicles delivery to the cell membrane in adipocytes. The sequence is that of Protein transport protein Sec16A (SEC16A) from Homo sapiens (Human).